We begin with the raw amino-acid sequence, 536 residues long: Plasmepsin V (536 aa).

Residues 1 to 34 form the signal peptide; the sequence is MVGASLGPPGRGSLSRLIRLVICVLTLCALSVQG. The Lumenal portion of the chain corresponds to 35 to 492; it reads RSESTEGHSK…RKDNIFLKIP (458 aa). The Peptidase A1 domain occupies 62 to 462; sequence YFLDIDIGTP…DIQKNRIGFV (401 aa). Asp-80 is a catalytic residue. 7 cysteine pairs are disulfide-bonded: Cys-90–Cys-172, Cys-93–Cys-96, Cys-117–Cys-128, Cys-122–Cys-133, Cys-220–Cys-466, Cys-337–Cys-382, and Cys-391–Cys-427. Over residues 244–258 the composition is skewed to low complexity; it reads SKSVSGQGSGPVSES. Positions 244–264 are disordered; that stretch reads SKSVSGQGSGPVSESLSESGE. Asp-313 is a catalytic residue. The chain crosses the membrane as a helical span at residues 493-513; that stretch reads FFYLYSLFVVFALSVLLSLVF. Residues 514–536 are Cytoplasmic-facing; that stretch reads YVRRLYHMEYSPLPSEGKAPADA.

The protein belongs to the peptidase A1 family. Component of a complex composed of SPC25 and PMV; the interaction is mediated via the transmembrane domains. The complex interacts with the SEC61 channel-forming translocon complex and is involved in the recognition and import of PEXEL motif-containing proteins into the ER for subsequent export. In terms of processing, it is not clear if the zymogen has a cleavable propeptide. Cleavage of the putative propeptide is dispensable for catalytic activity.

Its subcellular location is the endoplasmic reticulum membrane. Its activity is regulated as follows. Inhibited by peptidomimetic inhibitors such as WEHI-842. In terms of biological role, during the asexual blood stage, plays an essential role in the export of several proteins into the host erythrocytes by cleaving the pentameric localization motif RxLxE/Q/D (termed Plasmodium export element (PEXEL)) located downstream of the N-terminal secretory signal sequence. Specifically, cleaves after the leucine residue in the RxLxE/Q/D (or RxLxxE) motif of exported proteins including EMP1. Also, by regulating protein export, plays an essential role in gametocyte development and thus parasite transmission to the mosquito vector. The chain is Plasmepsin V from Plasmodium vivax (strain Salvador I).